The following is a 557-amino-acid chain: Dihydroxy-acid dehydratase (557 aa).

Asp78 provides a ligand contact to Mg(2+). Residue Cys119 coordinates [2Fe-2S] cluster. Mg(2+) contacts are provided by Asp120 and Lys121. Lys121 bears the N6-carboxylysine mark. Cys192 provides a ligand contact to [2Fe-2S] cluster. Glu443 is a Mg(2+) binding site. Ser469 acts as the Proton acceptor in catalysis.

This sequence belongs to the IlvD/Edd family. Homodimer. The cofactor is [2Fe-2S] cluster. Requires Mg(2+) as cofactor.

The catalysed reaction is (2R)-2,3-dihydroxy-3-methylbutanoate = 3-methyl-2-oxobutanoate + H2O. It carries out the reaction (2R,3R)-2,3-dihydroxy-3-methylpentanoate = (S)-3-methyl-2-oxopentanoate + H2O. The protein operates within amino-acid biosynthesis; L-isoleucine biosynthesis; L-isoleucine from 2-oxobutanoate: step 3/4. It participates in amino-acid biosynthesis; L-valine biosynthesis; L-valine from pyruvate: step 3/4. Functions in the biosynthesis of branched-chain amino acids. Catalyzes the dehydration of (2R,3R)-2,3-dihydroxy-3-methylpentanoate (2,3-dihydroxy-3-methylvalerate) into 2-oxo-3-methylpentanoate (2-oxo-3-methylvalerate) and of (2R)-2,3-dihydroxy-3-methylbutanoate (2,3-dihydroxyisovalerate) into 2-oxo-3-methylbutanoate (2-oxoisovalerate), the penultimate precursor to L-isoleucine and L-valine, respectively. The chain is Dihydroxy-acid dehydratase from Persephonella marina (strain DSM 14350 / EX-H1).